A 195-amino-acid chain; its full sequence is Xanthine phosphoribosyltransferase (195 aa).

Xanthine contacts are provided by leucine 20 and asparagine 27. 128–132 (ANGQA) serves as a coordination point for 5-phospho-alpha-D-ribose 1-diphosphate. Lysine 156 provides a ligand contact to xanthine.

It belongs to the purine/pyrimidine phosphoribosyltransferase family. Xpt subfamily. As to quaternary structure, homodimer.

It localises to the cytoplasm. It catalyses the reaction XMP + diphosphate = xanthine + 5-phospho-alpha-D-ribose 1-diphosphate. It functions in the pathway purine metabolism; XMP biosynthesis via salvage pathway; XMP from xanthine: step 1/1. Converts the preformed base xanthine, a product of nucleic acid breakdown, to xanthosine 5'-monophosphate (XMP), so it can be reused for RNA or DNA synthesis. The polypeptide is Xanthine phosphoribosyltransferase (Limosilactobacillus fermentum (strain NBRC 3956 / LMG 18251) (Lactobacillus fermentum)).